Reading from the N-terminus, the 376-residue chain is Probable allantoicase (376 aa).

It belongs to the allantoicase family.

It catalyses the reaction allantoate + H2O = (S)-ureidoglycolate + urea. It functions in the pathway nitrogen metabolism; (S)-allantoin degradation; (S)-ureidoglycolate from allantoate (aminidohydrolase route): step 1/1. The polypeptide is Probable allantoicase (Streptomyces coelicolor (strain ATCC BAA-471 / A3(2) / M145)).